The sequence spans 232 residues: tRNA (guanine-N(7)-)-methyltransferase (232 aa).

4 residues coordinate S-adenosyl-L-methionine: E38, D63, E90, and D113. D113 is a catalytic residue. Substrate contacts are provided by K117 and D149.

The protein belongs to the class I-like SAM-binding methyltransferase superfamily. TrmB family.

The enzyme catalyses guanosine(46) in tRNA + S-adenosyl-L-methionine = N(7)-methylguanosine(46) in tRNA + S-adenosyl-L-homocysteine. It functions in the pathway tRNA modification; N(7)-methylguanine-tRNA biosynthesis. Catalyzes the formation of N(7)-methylguanine at position 46 (m7G46) in tRNA. This chain is tRNA (guanine-N(7)-)-methyltransferase, found in Syntrophotalea carbinolica (strain DSM 2380 / NBRC 103641 / GraBd1) (Pelobacter carbinolicus).